The primary structure comprises 665 residues: Dual specificity protein phosphatase 16 (665 aa).

The Rhodanese domain occupies 22 to 137; the sequence is GTEKVLLIDS…FSRCFPGLCE (116 aa). Lys55 carries the (Microbial infection) N6-acetyllysine; by EIS modification. The Tyrosine-protein phosphatase domain occupies 158–300; sequence GPTRILPNLY…LLDYEKKIKN (143 aa). Catalysis depends on Cys244, which acts as the Phosphocysteine intermediate. Positions 321–368 are disordered; that stretch reads EPVPAVSEGGQKSETPLSPPCADSATSEAAGQRPVHPASVPSVPSVQP. Residues 354-368 are compositionally biased toward low complexity; the sequence is PVHPASVPSVPSVQP. Ser446 is subject to Phosphoserine; by MAPK1. 2 stretches are compositionally biased toward polar residues: residues 449–458 and 487–499; these read QELSEQTPET and VRTS…QRSL. Disordered stretches follow at residues 449 to 505 and 597 to 665; these read QELS…PLHR and VRRR…IEVS. A Phosphoserine modification is found at Ser501. The segment covering 602 to 622 has biased composition (basic and acidic residues); sequence KPSDRADSRRSWHEESPFEKQ.

It belongs to the protein-tyrosine phosphatase family. Non-receptor class dual specificity subfamily. Interacts with ARRB2. Phosphorylated at Ser-446 by MAPK1/ERK2, which prevents its degradation, and thereby stabilizes it and blocks JNK MAPK activity. Post-translationally, (Microbial infection) Acetylated at Lys-55 by the M.tuberculosis Eis protein; this leads to the inhibition of JNK-dependent autophagy, phagosome maturation, and ROS (reactive oxygen species) generation for enhanced intracellular survival of M.tuberculosis.

The protein resides in the cytoplasm. The protein localises to the nucleus. It is found in the cytoplasmic vesicle. The enzyme catalyses O-phospho-L-tyrosyl-[protein] + H2O = L-tyrosyl-[protein] + phosphate. It catalyses the reaction O-phospho-L-seryl-[protein] + H2O = L-seryl-[protein] + phosphate. The catalysed reaction is O-phospho-L-threonyl-[protein] + H2O = L-threonyl-[protein] + phosphate. Dual specificity protein phosphatase involved in the inactivation of MAP kinases. Dephosphorylates MAPK10 bound to ARRB2. The sequence is that of Dual specificity protein phosphatase 16 (DUSP16) from Homo sapiens (Human).